A 122-amino-acid chain; its full sequence is Ribonuclease P protein component (122 aa).

It belongs to the RnpA family. As to quaternary structure, consists of a catalytic RNA component (M1 or rnpB) and a protein subunit.

It carries out the reaction Endonucleolytic cleavage of RNA, removing 5'-extranucleotides from tRNA precursor.. Its function is as follows. RNaseP catalyzes the removal of the 5'-leader sequence from pre-tRNA to produce the mature 5'-terminus. It can also cleave other RNA substrates such as 4.5S RNA. The protein component plays an auxiliary but essential role in vivo by binding to the 5'-leader sequence and broadening the substrate specificity of the ribozyme. The chain is Ribonuclease P protein component from Oenococcus oeni (strain ATCC BAA-331 / PSU-1).